We begin with the raw amino-acid sequence, 295 residues long: G1/S-specific cyclin-D1 (295 aa).

The Cyclin N-terminal domain maps to 28-152 (LRAMLKAEET…LLVNKLKWNL (125 aa)). The interval 264 to 295 (QQSLDPKAAEEEEEEEEADLACTPTDVRDVNI) is disordered. Residue K270 forms a Glycyl lysine isopeptide (Lys-Gly) (interchain with G-Cter in ubiquitin) linkage. Over residues 273-282 (EEEEEEEEAD) the composition is skewed to acidic residues. The residue at position 286 (T286) is a Phosphothreonine.

It belongs to the cyclin family. Cyclin D subfamily. In terms of assembly, interacts with either CDK4 or CDK6 protein kinase to form a serine/threonine kinase holoenzyme complex. The cyclin subunit imparts substrate specificity to the complex. Component of the ternary complex CCND1/CDK4/CDKN1B required for nuclear translocation and modulation of CDK4-mediated kinase activity. Interacts directly with CDKN1B. Can form similar complexes with either CDKN1A or CDKN2A. Interacts with UHRF2; the interaction ubiquitinates CCND1 and appears to occur independently of phosphorylation. Interacts with USP2. Interacts (via cyclin N-terminal domain) with INSM1 (via N-terminal region); the interaction competes with the binding of CCND1 to CDK4 during cell cycle progression and inhibits CDK4 activity. Interacts with CDK4; the interaction is prevented with the binding of CCND1 to INSM1 during cell cycle progression. Phosphorylation at Thr-286 by MAP kinases is required for ubiquitination and degradation by the DCX(AMBRA1) complex. It also plays an essential role for recognition by the FBXO31 component of SCF (SKP1-cullin-F-box) protein ligase complex following DNA damage. In terms of processing, ubiquitinated at Lys-270 by the DCX(AMBRA1) complex during the transition from G1 to S cell phase, leading to its degradation: ubiquitination is dependent on Thr-286 phosphorylation. The DCX(AMBRA1) complex represents the major regulator of CCND1 stability during the G1/S transition. Also ubiquitinated by the SCF(FBXO4) and Cul7-RING(FBXW8) ubiquitin-protein ligase complexes. Following DNA damage it is ubiquitinated by the SCF(FBXO31) protein ligase complex. SCF(FBXO31) ubiquitination is dependent on Thr-286 phosphorylation. Ubiquitinated also by UHRF2 apparently in a phosphorylation-independent manner. Ubiquitination leads to its degradation and G1 arrest. Deubiquitinated by USP2; leading to its stabilization.

It localises to the nucleus. The protein localises to the cytoplasm. It is found in the nucleus membrane. Functionally, regulatory component of the cyclin D1-CDK4 (DC) complex that phosphorylates and inhibits members of the retinoblastoma (RB) protein family including RB1 and regulates the cell-cycle during G(1)/S transition. Phosphorylation of RB1 allows dissociation of the transcription factor E2F from the RB/E2F complex and the subsequent transcription of E2F target genes which are responsible for the progression through the G(1) phase. Hypophosphorylates RB1 in early G(1) phase. Cyclin D-CDK4 complexes are major integrators of various mitogenenic and antimitogenic signals. Also a substrate for SMAD3, phosphorylating SMAD3 in a cell-cycle-dependent manner and repressing its transcriptional activity. Component of the ternary complex, cyclin D1/CDK4/CDKN1B, required for nuclear translocation and activity of the cyclin D-CDK4 complex. Exhibits transcriptional corepressor activity with INSM1 on the NEUROD1 and INS promoters in a cell cycle-independent manner. This is G1/S-specific cyclin-D1 (CCND1) from Canis lupus familiaris (Dog).